The primary structure comprises 344 residues: Anthranilate phosphoribosyltransferase (344 aa).

Residues G80, 83-84 (GD), T88, 90-93 (NVST), 108-116 (KHGNRSVSS), and S120 each bind 5-phospho-alpha-D-ribose 1-diphosphate. G80 provides a ligand contact to anthranilate. S92 is a Mg(2+) binding site. An anthranilate-binding site is contributed by N111. Position 166 (R166) interacts with anthranilate. The Mg(2+) site is built by D225 and E226.

The protein belongs to the anthranilate phosphoribosyltransferase family. Homodimer. It depends on Mg(2+) as a cofactor.

The catalysed reaction is N-(5-phospho-beta-D-ribosyl)anthranilate + diphosphate = 5-phospho-alpha-D-ribose 1-diphosphate + anthranilate. It participates in amino-acid biosynthesis; L-tryptophan biosynthesis; L-tryptophan from chorismate: step 2/5. In terms of biological role, catalyzes the transfer of the phosphoribosyl group of 5-phosphorylribose-1-pyrophosphate (PRPP) to anthranilate to yield N-(5'-phosphoribosyl)-anthranilate (PRA). The chain is Anthranilate phosphoribosyltransferase from Legionella pneumophila (strain Lens).